The chain runs to 452 residues: Pup--protein ligase (452 aa).

Residue glutamate 9 coordinates Mg(2+). Position 53 (arginine 53) interacts with ATP. Tyrosine 55 is a binding site for Mg(2+). Aspartate 57 (proton acceptor) is an active-site residue. Glutamate 63 is a binding site for Mg(2+). Residues threonine 66 and tryptophan 419 each contribute to the ATP site.

Belongs to the Pup ligase/Pup deamidase family. Pup-conjugating enzyme subfamily.

The catalysed reaction is ATP + [prokaryotic ubiquitin-like protein]-L-glutamate + [protein]-L-lysine = ADP + phosphate + N(6)-([prokaryotic ubiquitin-like protein]-gamma-L-glutamyl)-[protein]-L-lysine.. Its pathway is protein degradation; proteasomal Pup-dependent pathway. It functions in the pathway protein modification; protein pupylation. In terms of biological role, catalyzes the covalent attachment of the prokaryotic ubiquitin-like protein modifier Pup to the proteasomal substrate proteins, thereby targeting them for proteasomal degradation. This tagging system is termed pupylation. The ligation reaction involves the side-chain carboxylate of the C-terminal glutamate of Pup and the side-chain amino group of a substrate lysine. The sequence is that of Pup--protein ligase from Mycolicibacterium vanbaalenii (strain DSM 7251 / JCM 13017 / BCRC 16820 / KCTC 9966 / NRRL B-24157 / PYR-1) (Mycobacterium vanbaalenii).